The primary structure comprises 418 residues: Diaminopimelate decarboxylase (418 aa).

N6-(pyridoxal phosphate)lysine is present on K53. Residues G223 and 264 to 267 each bind pyridoxal 5'-phosphate; that span reads EPGR. Positions 267, 303, and 307 each coordinate substrate. Catalysis depends on C338, which acts as the Proton donor. Positions 339 and 374 each coordinate substrate. Residue Y374 coordinates pyridoxal 5'-phosphate.

This sequence belongs to the Orn/Lys/Arg decarboxylase class-II family. LysA subfamily. Homodimer. It depends on pyridoxal 5'-phosphate as a cofactor.

The enzyme catalyses meso-2,6-diaminopimelate + H(+) = L-lysine + CO2. It participates in amino-acid biosynthesis; L-lysine biosynthesis via DAP pathway; L-lysine from DL-2,6-diaminopimelate: step 1/1. Functionally, specifically catalyzes the decarboxylation of meso-diaminopimelate (meso-DAP) to L-lysine. The sequence is that of Diaminopimelate decarboxylase from Buchnera aphidicola subsp. Baizongia pistaciae (strain Bp).